The primary structure comprises 156 residues: UPF0460 protein in nifX 3'region (156 aa).

The protein belongs to the UPF0460 family.

The polypeptide is UPF0460 protein in nifX 3'region (Rhodobacter capsulatus (Rhodopseudomonas capsulata)).